A 184-amino-acid chain; its full sequence is Photosystem I assembly protein Ycf4 (184 aa).

Helical transmembrane passes span 22 to 42 (FCWAFILFLGSLGFLLVGTSS) and 57 to 77 (IIFFPQGIVMSFYGIAGLFIS).

The protein belongs to the Ycf4 family.

It is found in the plastid. It localises to the chloroplast thylakoid membrane. Seems to be required for the assembly of the photosystem I complex. This Crucihimalaya wallichii (Rock-cress) protein is Photosystem I assembly protein Ycf4.